Here is a 134-residue protein sequence, read N- to C-terminus: MGARKHNSAEARKEALKQMYFAKLRNVPTSPRKMRLVADMIRGMEVNRALGVLKFSNKEASARVEKLLRSAVANWEEKNERKAEEGELFVSRICVDGASTLKRLRPAPQGRGYRIRKRSNHVTIYVDTLNNDNN.

It belongs to the universal ribosomal protein uL22 family. Part of the 50S ribosomal subunit.

In terms of biological role, this protein binds specifically to 23S rRNA; its binding is stimulated by other ribosomal proteins, e.g. L4, L17, and L20. It is important during the early stages of 50S assembly. It makes multiple contacts with different domains of the 23S rRNA in the assembled 50S subunit and ribosome. Its function is as follows. The globular domain of the protein is located near the polypeptide exit tunnel on the outside of the subunit, while an extended beta-hairpin is found that lines the wall of the exit tunnel in the center of the 70S ribosome. This Porphyromonas gingivalis (strain ATCC 33277 / DSM 20709 / CIP 103683 / JCM 12257 / NCTC 11834 / 2561) protein is Large ribosomal subunit protein uL22.